The chain runs to 300 residues: Zinc finger protein 705B (300 aa).

The region spanning 7–78 (VTFEDVAIDF…GRVFLQDQNP (72 aa)) is the KRAB domain. C2H2-type zinc fingers lie at residues 172 to 194 (YQCN…KMTH), 200 to 222 (YACH…EKTH), and 228 to 250 (YKCH…ERTH). A C2H2-type 4; degenerate zinc finger spans residues 256–278 (YECDKSGKAFSQSSGFRGNKIIH).

This sequence belongs to the krueppel C2H2-type zinc-finger protein family.

It is found in the nucleus. Functionally, may be involved in transcriptional regulation. The sequence is that of Zinc finger protein 705B (ZNF705B) from Homo sapiens (Human).